The primary structure comprises 150 residues: 3-hydroxyacyl-[acyl-carrier-protein] dehydratase FabZ (150 aa).

Histidine 54 is an active-site residue.

This sequence belongs to the thioester dehydratase family. FabZ subfamily.

It is found in the cytoplasm. It catalyses the reaction a (3R)-hydroxyacyl-[ACP] = a (2E)-enoyl-[ACP] + H2O. Functionally, involved in unsaturated fatty acids biosynthesis. Catalyzes the dehydration of short chain beta-hydroxyacyl-ACPs and long chain saturated and unsaturated beta-hydroxyacyl-ACPs. This Vibrio vulnificus (strain CMCP6) protein is 3-hydroxyacyl-[acyl-carrier-protein] dehydratase FabZ.